The primary structure comprises 259 residues: Dihydroorotate dehydrogenase B (NAD(+)), electron transfer subunit (259 aa).

The 101-residue stretch at 2 to 102 (MQKQNMIVVN…LGPLGHGFPV (101 aa)) folds into the FAD-binding FR-type domain. Residues 53-56 (RPIS), 70-72 (LYR), and 77-78 (GT) contribute to the FAD site. Residues Cys221, Cys226, Cys229, and Cys246 each contribute to the [2Fe-2S] cluster site.

The protein belongs to the PyrK family. As to quaternary structure, heterotetramer of 2 PyrK and 2 PyrD type B subunits. The cofactor is [2Fe-2S] cluster. FAD is required as a cofactor.

It functions in the pathway pyrimidine metabolism; UMP biosynthesis via de novo pathway; orotate from (S)-dihydroorotate (NAD(+) route): step 1/1. Functionally, responsible for channeling the electrons from the oxidation of dihydroorotate from the FMN redox center in the PyrD type B subunit to the ultimate electron acceptor NAD(+). The protein is Dihydroorotate dehydrogenase B (NAD(+)), electron transfer subunit of Bacillus cereus (strain Q1).